Consider the following 612-residue polypeptide: Alpha-glycerophosphate oxidase (612 aa).

21-49 (DLLIIGGGITGAGVALQAAASGLDTGLIE) contributes to the FAD binding site. Over residues 399 to 408 (ETSTSEKELD) the composition is skewed to basic and acidic residues. The tract at residues 399 to 418 (ETSTSEKELDPSAVSRGSSF) is disordered.

It belongs to the FAD-dependent glycerol-3-phosphate dehydrogenase family. The cofactor is FAD.

The protein localises to the cytoplasm. The catalysed reaction is sn-glycerol 3-phosphate + O2 = dihydroxyacetone phosphate + H2O2. The protein is Alpha-glycerophosphate oxidase (glpO) of Streptococcus pyogenes serotype M1.